A 208-amino-acid polypeptide reads, in one-letter code: 3-demethoxyubiquinol 3-hydroxylase (208 aa).

Glutamate 57, glutamate 87, histidine 90, glutamate 139, glutamate 171, and histidine 174 together coordinate Fe cation.

This sequence belongs to the COQ7 family. Fe cation serves as cofactor.

It is found in the cell membrane. It carries out the reaction a 5-methoxy-2-methyl-3-(all-trans-polyprenyl)benzene-1,4-diol + AH2 + O2 = a 3-demethylubiquinol + A + H2O. It participates in cofactor biosynthesis; ubiquinone biosynthesis. Its function is as follows. Catalyzes the hydroxylation of 2-nonaprenyl-3-methyl-6-methoxy-1,4-benzoquinol during ubiquinone biosynthesis. The sequence is that of 3-demethoxyubiquinol 3-hydroxylase from Nitrosomonas europaea (strain ATCC 19718 / CIP 103999 / KCTC 2705 / NBRC 14298).